Reading from the N-terminus, the 234-residue chain is Ubiquinone biosynthesis O-methyltransferase (234 aa).

S-adenosyl-L-methionine contacts are provided by Arg-40, Gly-59, Asp-80, and Met-123.

Belongs to the methyltransferase superfamily. UbiG/COQ3 family.

It catalyses the reaction a 3-demethylubiquinol + S-adenosyl-L-methionine = a ubiquinol + S-adenosyl-L-homocysteine + H(+). It carries out the reaction a 3-(all-trans-polyprenyl)benzene-1,2-diol + S-adenosyl-L-methionine = a 2-methoxy-6-(all-trans-polyprenyl)phenol + S-adenosyl-L-homocysteine + H(+). It functions in the pathway cofactor biosynthesis; ubiquinone biosynthesis. Functionally, O-methyltransferase that catalyzes the 2 O-methylation steps in the ubiquinone biosynthetic pathway. The sequence is that of Ubiquinone biosynthesis O-methyltransferase from Coxiella burnetii (strain Dugway 5J108-111).